The chain runs to 362 residues: 4-hydroxy-3-methylbut-2-en-1-yl diphosphate synthase (flavodoxin) (362 aa).

Positions 266, 269, 301, and 308 each coordinate [4Fe-4S] cluster.

This sequence belongs to the IspG family. The cofactor is [4Fe-4S] cluster.

The enzyme catalyses (2E)-4-hydroxy-3-methylbut-2-enyl diphosphate + oxidized [flavodoxin] + H2O + 2 H(+) = 2-C-methyl-D-erythritol 2,4-cyclic diphosphate + reduced [flavodoxin]. The protein operates within isoprenoid biosynthesis; isopentenyl diphosphate biosynthesis via DXP pathway; isopentenyl diphosphate from 1-deoxy-D-xylulose 5-phosphate: step 5/6. Functionally, converts 2C-methyl-D-erythritol 2,4-cyclodiphosphate (ME-2,4cPP) into 1-hydroxy-2-methyl-2-(E)-butenyl 4-diphosphate. This chain is 4-hydroxy-3-methylbut-2-en-1-yl diphosphate synthase (flavodoxin), found in Malacoplasma penetrans (strain HF-2) (Mycoplasma penetrans).